Consider the following 232-residue polypeptide: Aliphatic sulfonates import ATP-binding protein SsuB 2 (232 aa).

Residues 1–216 (MDIRVDRKAF…PRDRRDPLLA (216 aa)) form the ABC transporter domain. 33–40 (GPSGCGKS) is an ATP binding site.

This sequence belongs to the ABC transporter superfamily. Aliphatic sulfonates importer (TC 3.A.1.17.2) family. In terms of assembly, the complex is composed of two ATP-binding proteins (SsuB), two transmembrane proteins (SsuC) and a solute-binding protein (SsuA).

The protein resides in the cell inner membrane. It catalyses the reaction ATP + H2O + aliphatic sulfonate-[sulfonate-binding protein]Side 1 = ADP + phosphate + aliphatic sulfonateSide 2 + [sulfonate-binding protein]Side 1.. Part of the ABC transporter complex SsuABC involved in aliphatic sulfonates import. Responsible for energy coupling to the transport system. The sequence is that of Aliphatic sulfonates import ATP-binding protein SsuB 2 from Pseudomonas syringae pv. tomato (strain ATCC BAA-871 / DC3000).